A 508-amino-acid polypeptide reads, in one-letter code: MAISLSAPRTTELKPRIVVFGVGGAGGNAVNNMIEAGLEGVEFVVANTDAQQLQFAKTDRRIQLGVQITQGLGAGAHPEVGMSAAEESFPEIGEHLDGAHMVFITAGMGGGTGTGAAPIIAKCARERGILTVGVVTKPFHFEGRHRMRLADSGIQELQRYVDTLIVIPNQNLFRVANERTTFAEAFGMADQVLHSGVRSITDLMVLPGLINLDFADVRTVMTEMGKAMMGTGEGTGEDRALMAAQNAIANPLLDEVSLKGAKAVLVNVTGGMDMTLLEVDEAANAISDQVDPEANIIFGAAFDPSLEGVIRVSVVATGMDGASIAQIEPKPVSRNISAAPLIAETSRPAPQPEPARPTARYEAARPAERPVAFAPEPAPEPEIVMSAPQPEPEAELYYDEPTVAEEPRVSAAPARSVNRIVDPLVDDVAEEPLFPENNYYEERRPQKQGGFFSMFGGGRQRYEQQASAPQAQARSAQSARPQLQPIETPQADDAEDLEIPSFLRRLAN.

GTP-binding positions include 24-28 (GAGGN), 111-113 (GTG), Glu-142, Arg-146, and Asp-190. Disordered regions lie at residues 342 to 389 (IAET…SAPQ) and 428 to 508 (VAEE…RLAN). Residues 464 to 482 (QQASAPQAQARSAQSARPQ) show a composition bias toward low complexity.

This sequence belongs to the FtsZ family. In terms of assembly, homodimer. Polymerizes to form a dynamic ring structure in a strictly GTP-dependent manner. Interacts directly with several other division proteins.

Its subcellular location is the cytoplasm. Functionally, essential cell division protein that forms a contractile ring structure (Z ring) at the future cell division site. The regulation of the ring assembly controls the timing and the location of cell division. One of the functions of the FtsZ ring is to recruit other cell division proteins to the septum to produce a new cell wall between the dividing cells. Binds GTP and shows GTPase activity. This is Cell division protein FtsZ from Caulobacter vibrioides (strain ATCC 19089 / CIP 103742 / CB 15) (Caulobacter crescentus).